A 1064-amino-acid chain; its full sequence is Phosphatidylinositol 4,5-bisphosphate 3-kinase catalytic subunit beta isoform (1064 aa).

The region spanning 20 to 109 (SDGAISVDFL…LPVLKLVTRS (90 aa)) is the PI3K-ABD domain. One can recognise a PI3K-RBD domain in the interval 188-279 (GGKLVVAVHF…RTLPHFILVE (92 aa)). The residue at position 318 (serine 318) is a Phosphoserine. The region spanning 323–490 (NNNPFQITLV…NATALHITFP (168 aa)) is the C2 PI3K-type domain. Positions 404 to 412 (KVKTKKSTK) match the Nuclear localization signal (NLS) motif. One can recognise a PIK helical domain in the interval 518–695 (ANVSSRGGKK…GVILEAYCRG (178 aa)). The PI3K/PI4K catalytic domain occupies 766–1047 (YVEKCKYMDS…KFDEALRESW (282 aa)). Residues 772 to 778 (YMDSKMK) are G-loop. The segment at 910–918 (GIGDRHSDN) is catalytic loop. The segment at 929-955 (HIDFGHILGNFKSKFGIKRERVPFILT) is activation loop. Serine 1064 is modified (phosphoserine; by autocatalysis).

It belongs to the PI3/PI4-kinase family. As to quaternary structure, heterodimer of a catalytic subunit PIK3CB and a p85 regulatory subunit (PIK3R1, PIK3R2 or PIK3R3). Interaction with PIK3R2 is required for nuclear localization and nuclear export. Part of a complex with PIK3R1 and PTEN. Binding to PTEN may antagonize the lipid kinase activity under normal growth conditions. Part of a complex involved in autophagosome formation composed of PIK3C3 and PIK3R4. Interacts with BECN1, ATG14 and RAB5A. Post-translationally, phosphorylation at Ser-1064 down-regulates lipid kinase activity. Autophosphorylation at Ser-1064 negatively regulates the phosphatidylinositol-4,5-bisphosphate 3-kinase activity.

The protein localises to the cytoplasm. Its subcellular location is the nucleus. It carries out the reaction a 1,2-diacyl-sn-glycero-3-phospho-(1D-myo-inositol-4,5-bisphosphate) + ATP = a 1,2-diacyl-sn-glycero-3-phospho-(1D-myo-inositol-3,4,5-trisphosphate) + ADP + H(+). It catalyses the reaction 1-octadecanoyl-2-(5Z,8Z,11Z,14Z)-eicosatetraenoyl-sn-glycero-3-phospho-1D-myo-inositol 4,5-bisphosphate + ATP = 1-octadecanoyl-2-(5Z,8Z,11Z,14Z-eicosatetraenoyl)-sn-glycero-3-phospho-(1D-myo-inositol 3,4,5-triphosphate) + ADP + H(+). The catalysed reaction is L-seryl-[protein] + ATP = O-phospho-L-seryl-[protein] + ADP + H(+). The protein operates within phospholipid metabolism; phosphatidylinositol phosphate biosynthesis. Functionally, phosphoinositide-3-kinase (PI3K) phosphorylates phosphatidylinositol (PI) derivatives at position 3 of the inositol ring to produce 3-phosphoinositides. Uses ATP and PtdIns(4,5)P2 (phosphatidylinositol 4,5-bisphosphate) to generate phosphatidylinositol 3,4,5-trisphosphate (PIP3). PIP3 plays a key role by recruiting PH domain-containing proteins to the membrane, including AKT1 and PDPK1, activating signaling cascades involved in cell growth, survival, proliferation, motility and morphology. Involved in the activation of AKT1 upon stimulation by G-protein coupled receptors (GPCRs) ligands such as CXCL12, sphingosine 1-phosphate, and lysophosphatidic acid. May also act downstream receptor tyrosine kinases. Required in different signaling pathways for stable platelet adhesion and aggregation. Plays a role in platelet activation signaling triggered by GPCRs, alpha-IIb/beta-3 integrins (ITGA2B/ ITGB3) and ITAM (immunoreceptor tyrosine-based activation motif)-bearing receptors such as GP6. Regulates the strength of adhesion of ITGA2B/ ITGB3 activated receptors necessary for the cellular transmission of contractile forces. Required for platelet aggregation induced by F2 (thrombin) and thromboxane A2 (TXA2). Has a role in cell survival. May have a role in cell migration. Involved in the early stage of autophagosome formation. Modulates the intracellular level of PtdIns3P (phosphatidylinositol 3-phosphate) and activates PIK3C3 kinase activity. May act as a scaffold, independently of its lipid kinase activity to positively regulate autophagy. May have a role in insulin signaling as scaffolding protein in which the lipid kinase activity is not required. May have a kinase-independent function in regulating cell proliferation and in clathrin-mediated endocytosis. Mediator of oncogenic signal in cell lines lacking PTEN. The lipid kinase activity is necessary for its role in oncogenic transformation. Required for the growth of ERBB2 and RAS driven tumors. Also has a protein kinase activity showing autophosphorylation. The sequence is that of Phosphatidylinositol 4,5-bisphosphate 3-kinase catalytic subunit beta isoform (Pik3cb) from Mus musculus (Mouse).